A 339-amino-acid polypeptide reads, in one-letter code: Dihydroorotate dehydrogenase (quinone) (339 aa).

Residues 61 to 65 (AGLDK) and Thr85 each bind FMN. Lys65 provides a ligand contact to substrate. 110 to 114 (NRMGF) serves as a coordination point for substrate. The FMN site is built by Asn138 and Asn171. Asn171 serves as a coordination point for substrate. Ser174 functions as the Nucleophile in the catalytic mechanism. Asn176 is a binding site for substrate. FMN is bound by residues Lys216 and Thr244. 245–246 (NT) serves as a coordination point for substrate. FMN is bound by residues Gly267, Gly296, and 317–318 (YS).

It belongs to the dihydroorotate dehydrogenase family. Type 2 subfamily. Monomer. The cofactor is FMN.

It is found in the cell membrane. It carries out the reaction (S)-dihydroorotate + a quinone = orotate + a quinol. Its pathway is pyrimidine metabolism; UMP biosynthesis via de novo pathway; orotate from (S)-dihydroorotate (quinone route): step 1/1. Its function is as follows. Catalyzes the conversion of dihydroorotate to orotate with quinone as electron acceptor. In Saccharophagus degradans (strain 2-40 / ATCC 43961 / DSM 17024), this protein is Dihydroorotate dehydrogenase (quinone).